Consider the following 308-residue polypeptide: Porphobilinogen deaminase (308 aa).

Residue Cys-240 is modified to S-(dipyrrolylmethanemethyl)cysteine.

This sequence belongs to the HMBS family. Monomer. Dipyrromethane is required as a cofactor.

It carries out the reaction 4 porphobilinogen + H2O = hydroxymethylbilane + 4 NH4(+). It participates in porphyrin-containing compound metabolism; protoporphyrin-IX biosynthesis; coproporphyrinogen-III from 5-aminolevulinate: step 2/4. Its function is as follows. Tetrapolymerization of the monopyrrole PBG into the hydroxymethylbilane pre-uroporphyrinogen in several discrete steps. This chain is Porphobilinogen deaminase, found in Campylobacter lari (strain RM2100 / D67 / ATCC BAA-1060).